Reading from the N-terminus, the 806-residue chain is Transitional endoplasmic reticulum ATPase (806 aa).

Residue Ser-3 is modified to Phosphoserine. ATP is bound by residues 247–253, Asn-348, His-384, and 521–526; these read PGTGKTL and GCGKTL. Disordered regions lie at residues 708-727 and 768-806; these read RRERERQTNPSAMEVEEDDP and FGSFRFPSSNQGGSGPSQGSSGGGGGNVFNEDNDDDLYG. The span at 768–778 shows a compositional bias: low complexity; the sequence is FGSFRFPSSNQ. Residues 779-794 show a composition bias toward gly residues; that stretch reads GGSGPSQGSSGGGGGN.

Belongs to the AAA ATPase family. As to quaternary structure, homohexamer.

It localises to the cytoplasm. The protein localises to the cytosol. It is found in the endoplasmic reticulum. Its subcellular location is the nucleus. It catalyses the reaction ATP + H2O = ADP + phosphate + H(+). In terms of biological role, necessary for the fragmentation of Golgi stacks during mitosis and for their reassembly after mitosis. Involved in the formation of the nuclear envelope, and of the transitional endoplasmic reticulum (tER). The transfer of membranes from the endoplasmic reticulum to the Golgi apparatus occurs via 50-70 nm transition vesicles which derive from part-rough, part-smooth transitional elements of the endoplasmic reticulum (tER). Vesicle budding from the tER is an ATP-dependent process. Also involved in DNA damage response: recruited to double-strand breaks (DSBs) sites and promotes the recruitment of tp53bp1 at DNA damage sites. Together with sprtn metalloprotease, involved in the repair of covalent DNA-protein cross-links (DPCs) during DNA synthesis. Involved in interstrand cross-link repair in response to replication stress by mediating unloading of the ubiquitinated CMG helicase complex. Enhances cell cycle progression and inhibits apoptosis at low temperatures. Essential for the maturation of ubiquitin-containing autophagosomes and the clearance of ubiquitinated protein by autophagy. Acts as a negative regulator of type I interferon production by promoting ubiquitination of RIGI. May play a role in the ubiquitin-dependent sorting of membrane proteins to lysosomes where they undergo degradation. May more particularly play a role in caveolins sorting in cells. By controlling the steady-state expression of the IGF1R receptor, indirectly regulates the insulin-like growth factor receptor signaling pathway. This Danio rerio (Zebrafish) protein is Transitional endoplasmic reticulum ATPase.